The sequence spans 138 residues: MRILWIVAVCLIGVEGNLFQFAKMINGKLGAFSVWNYISYGCYCGWGGQGTPKDATDRCCFVHDCCYGRVRGCNPKLAIYAYSFKKGNIVCGKNNGCLRDICECDRVAANCFHQNKNTYNKNYRFLSSSRCRQTSEQC.

An N-terminal signal peptide occupies residues 1–16; that stretch reads MRILWIVAVCLIGVEG. 7 disulfides stabilise this stretch: Cys42/Cys131, Cys44/Cys60, Cys59/Cys111, Cys65/Cys138, Cys66/Cys104, Cys73/Cys97, and Cys91/Cys102. Ca(2+)-binding residues include Tyr43, Gly45, and Gly47. The active site involves His63. Position 64 (Asp64) interacts with Ca(2+). Asp105 is an active-site residue.

Heterodimer of an acidic and a basic chain; non-covalently linked. The toxic basic protein has phospholipase A2 activity (chain HDP-2P) and the non-toxic acidic protein functions as its inhibitor (chain HPD-1I (AC A4VBF0)). Requires Ca(2+) as cofactor. In terms of tissue distribution, expressed by the venom gland.

It is found in the secreted. The catalysed reaction is a 1,2-diacyl-sn-glycero-3-phosphocholine + H2O = a 1-acyl-sn-glycero-3-phosphocholine + a fatty acid + H(+). With respect to regulation, enzymatic activity and neurotoxicity are inhibited by Triton X-100. Triton X-100 has been determined to be located in the center of the hydrophobic channel of the enzyme. Monomer: snake venom phospholipase A2 (PLA2) that affects neuromuscular transmission presynaptically. It has catalytic activity, anticoagulant activity and weakly inhibits ADP-induced platelet aggregation. PLA2 catalyzes the calcium-dependent hydrolysis of the 2-acyl groups in 3-sn-phosphoglycerides. Functionally, heterodimer: shows the same activities as the monomer, but with a lower potency. This chain is Basic phospholipase A2 chain HDP-2P, found in Vipera nikolskii (Nikolsky's adder).